Consider the following 495-residue polypeptide: MADRNLRDLLAPWVPDAPSRALREMTLDSRVAAAGDLFVAVVGHQADGRRYIPQAIAQGVAAIIAEAKDEATDGEIREMHGVPVIYLSQLNERLSALAGRFYHEPSDNLRLVGVTGTNGKTTTTQLLAQWSQLLGEISAVMGTVGNGLLGKVIPTENTTGSAVDVQHELAGLVDQGATFCAMEVSSHGLVQHRVAALKFAASVFTNLSRDHLDYHGDMEHYEAAKWLLYSEHHCGQAIINADDEVGRRWLAKLPDAVAVSMEDHINPNCHGRWLKATEVNYHDSGATIRFSSSWGDGEIESHLMGAFNVSNLLLALATLLALGYPLADLLKTAARLQPVCGRMEVFTAPGKPTVVVDYAHTPDALEKALQAARLHCAGKLWCVFGCGGDRDKGKRPLMGAIAEEFADVAVVTDDNPRTEEPRAIINDILAGMLDAGHAKVMEGRAEAVTCAVMQAKENDVVLVAGKGHEDYQIVGNQRLDYSDRVTVARLLGVIA.

UDP-N-acetyl-alpha-D-muramoyl-L-alanyl-D-glutamate contacts are provided by residues L27, S29, and 44–46; that span reads HQA. 116–122 serves as a coordination point for ATP; sequence GTNGKTT. UDP-N-acetyl-alpha-D-muramoyl-L-alanyl-D-glutamate is bound by residues N157, 158–159, S185, Q191, and R193; that span reads TT. An N6-carboxylysine modification is found at K225. Meso-2,6-diaminopimelate contacts are provided by residues R390, 414–417, G465, and E469; that span reads DNPR. Residues 414–417 carry the Meso-diaminopimelate recognition motif motif; it reads DNPR.

Belongs to the MurCDEF family. MurE subfamily. Mg(2+) is required as a cofactor. In terms of processing, carboxylation is probably crucial for Mg(2+) binding and, consequently, for the gamma-phosphate positioning of ATP.

It localises to the cytoplasm. It carries out the reaction UDP-N-acetyl-alpha-D-muramoyl-L-alanyl-D-glutamate + meso-2,6-diaminopimelate + ATP = UDP-N-acetyl-alpha-D-muramoyl-L-alanyl-gamma-D-glutamyl-meso-2,6-diaminopimelate + ADP + phosphate + H(+). It participates in cell wall biogenesis; peptidoglycan biosynthesis. With respect to regulation, activated by potassium phosphate. Its function is as follows. Catalyzes the addition of meso-diaminopimelic acid to the nucleotide precursor UDP-N-acetylmuramoyl-L-alanyl-D-glutamate (UMAG) in the biosynthesis of bacterial cell-wall peptidoglycan. Is also able to use many meso-diaminopimelate analogs as substrates, although much less efficiently, but not L-lysine. In Escherichia coli (strain K12), this protein is UDP-N-acetylmuramoyl-L-alanyl-D-glutamate--2,6-diaminopimelate ligase (murE).